The primary structure comprises 357 residues: Alpha-2-macroglobulin receptor-associated protein (357 aa).

A signal peptide spans 1–34; sequence MAPRRVRSFLRGLPALLLLLLFLGPWPAASHGGK. Residues 32–52 are disordered; that stretch reads GGKYSREKNQPKPSPKRESGE. Positions 35-52 are enriched in basic and acidic residues; it reads YSREKNQPKPSPKRESGE. Residues Ser-50 and Ser-135 each carry the phosphoserine modification. Residues 219–310 are a coiled coil; sequence SRHTELKEKL…AHEKLRHAES (92 aa). Positions 237–353 are LDL receptor binding; that stretch reads RLRRVSHQGY…DLSGRISRAR (117 aa). At Thr-248 the chain carries Phosphothreonine. A glycan (N-linked (GlcNAc...) asparagine) is linked at Asn-268. The Prevents secretion from ER signature appears at 354–357; the sequence is HNEL.

This sequence belongs to the alpha-2-MRAP family. In terms of assembly, interacts with the LRP1/alpha-2-macroglobulin receptor heavy and light chains; the interaction is transient and coincides with a reduction of ligand binding by the receptor. Interacts with LRP2/glycoprotein 330. Interacts with LRP1B; binding is followed by internalization and degradation. Interacts with LDLR. Interacts with SORL1. Interacts with LRP1; this interaction is followed by rapid internalization. N-glycosylated.

The protein resides in the rough endoplasmic reticulum lumen. It is found in the endoplasmic reticulum-Golgi intermediate compartment lumen. The protein localises to the golgi apparatus. It localises to the cis-Golgi network. Its subcellular location is the golgi apparatus lumen. The protein resides in the endosome lumen. It is found in the cell surface. Molecular chaperone for LDL receptor-related proteins that may regulate their ligand binding activity along the secretory pathway. This is Alpha-2-macroglobulin receptor-associated protein from Homo sapiens (Human).